The following is a 445-amino-acid chain: Chromosome partition protein MukF (445 aa).

The segment at 213 to 241 (LSETSSTLRELQDTLQAASDELQTQILDI) is leucine-zipper.

It belongs to the MukF family. In terms of assembly, interacts, and probably forms a ternary complex, with MukE and MukB via its C-terminal region. The complex formation is stimulated by calcium or magnesium. It is required for an interaction between MukE and MukB.

Its subcellular location is the cytoplasm. The protein resides in the nucleoid. Functionally, involved in chromosome condensation, segregation and cell cycle progression. May participate in facilitating chromosome segregation by condensation DNA from both sides of a centrally located replisome during cell division. Not required for mini-F plasmid partitioning. Probably acts via its interaction with MukB and MukE. Overexpression results in anucleate cells. It has a calcium binding activity. The chain is Chromosome partition protein MukF from Vibrio parahaemolyticus serotype O3:K6 (strain RIMD 2210633).